Here is a 616-residue protein sequence, read N- to C-terminus: Proline--tRNA ligase (616 aa).

This sequence belongs to the class-II aminoacyl-tRNA synthetase family. ProS type 1 subfamily. As to quaternary structure, homodimer.

The protein resides in the cytoplasm. It catalyses the reaction tRNA(Pro) + L-proline + ATP = L-prolyl-tRNA(Pro) + AMP + diphosphate. Its function is as follows. Catalyzes the attachment of proline to tRNA(Pro) in a two-step reaction: proline is first activated by ATP to form Pro-AMP and then transferred to the acceptor end of tRNA(Pro). As ProRS can inadvertently accommodate and process non-cognate amino acids such as alanine and cysteine, to avoid such errors it has two additional distinct editing activities against alanine. One activity is designated as 'pretransfer' editing and involves the tRNA(Pro)-independent hydrolysis of activated Ala-AMP. The other activity is designated 'posttransfer' editing and involves deacylation of mischarged Ala-tRNA(Pro). The misacylated Cys-tRNA(Pro) is not edited by ProRS. This chain is Proline--tRNA ligase, found in Lactococcus lactis subsp. cremoris (strain SK11).